The primary structure comprises 467 residues: Zinc finger protein 410 (467 aa).

Disordered regions lie at residues 84 to 111 (PDGE…SLLQ) and 187 to 214 (NAKT…PLPQ). 5 C2H2-type zinc fingers span residues 219 to 243 (LKCT…LKTH), 249 to 273 (FICP…MRTH), 279 to 303 (FVCP…LRIH), 309 to 333 (FLCE…LVVH), and 339 to 362 (HQCQ…RKHH). Positions 221, 226, 239, 243, 251, 256, 269, 273, 281, 286, 299, 303, 311, 316, 329, 333, 341, 344, 357, and 361 each coordinate Zn(2+).

Interacts with CDKN2A/p14ARF. Post-translationally, O-glycosylated. O-GlcNAcylation may occur in response to increasing glucose levels and affect transcription factor activity. In terms of processing, sumoylated. Sumoylation increases its half-life, possibly by blocking ubiquitin-mediated degradation.

Its subcellular location is the nucleus. It is found in the chromosome. Its function is as follows. Transcription factor that binds to the sequence motif 5'-CATCCCATAATA-3', and is specifically required to silence expression of fetal hemoglobin in adult erythroid cells. Prevents expression of fetal hemoglobin genes HBG1 and HBG2 through CHD4: acts as a direct transcriptional activator of CHD4, a central component of the NuRD complex that represses transcription of fetal hemoglobin genes HBG1 and HBG2 in erythroid cells. May also activate transcription of matrix-remodeling genes such as MMP1 during fibroblast senescence. May activate transcription of the gap junction gene GJC1, perhaps in response to increasing glucose. However, recent studies suggest that ZNF410 is dedicated to regulate expression of a single gene: CHD4. This chain is Zinc finger protein 410, found in Bos taurus (Bovine).